The following is a 401-amino-acid chain: Putative phosphatidylinositol 4-phosphate 5-kinase 11 (401 aa).

One can recognise a PIPK domain in the interval 1–390 (MELRATVENR…RFQDFVSNIF (390 aa)). The span at 242 to 260 (SFKSNSTKSMKTASSSPDR) shows a compositional bias: polar residues. Residues 242–268 (SFKSNSTKSMKTASSSPDRSSVAMYSC) are disordered. The activation loop stretch occupies residues 350-371 (YGMKKRIEHCYKSIQYNSNSIS).

It carries out the reaction a 1,2-diacyl-sn-glycero-3-phospho-(1D-myo-inositol 4-phosphate) + ATP = a 1,2-diacyl-sn-glycero-3-phospho-(1D-myo-inositol-4,5-bisphosphate) + ADP + H(+). This is Putative phosphatidylinositol 4-phosphate 5-kinase 11 (PIP5K11) from Arabidopsis thaliana (Mouse-ear cress).